Here is a 311-residue protein sequence, read N- to C-terminus: Cbb3-type cytochrome c oxidase subunit CcoP1 (311 aa).

2 consecutive transmembrane segments (helical) span residues 4-24 and 56-76; these read FWSG…FWLI and RWWF…LVLY. Cytochrome c domains follow at residues 130-209 and 220-302; these read QAVK…RKDL and ADLS…YSLS. Cysteine 143, cysteine 146, histidine 147, methionine 186, cysteine 233, cysteine 236, histidine 237, and methionine 279 together coordinate heme c.

It belongs to the CcoP / FixP family. In terms of assembly, component of the cbb3-type cytochrome c oxidase at least composed of CcoN, CcoO, CcoQ and CcoP. The cofactor is heme c.

The protein localises to the cell inner membrane. It functions in the pathway energy metabolism; oxidative phosphorylation. C-type cytochrome. Part of the cbb3-type cytochrome c oxidase complex. CcoP subunit is required for transferring electrons from donor cytochrome c via its heme groups to CcoO subunit. From there, electrons are shuttled to the catalytic binuclear center of CcoN subunit where oxygen reduction takes place. The complex also functions as a proton pump. This is Cbb3-type cytochrome c oxidase subunit CcoP1 from Stutzerimonas stutzeri (Pseudomonas stutzeri).